Reading from the N-terminus, the 784-residue chain is Melanoma-associated antigen D1 (784 aa).

The interval P41 to V67 is disordered. Positions A47–N65 are enriched in low complexity. Y97 bears the Phosphotyrosine mark. Polar residues-rich tracts occupy residues P195–A214, A232–S246, N259–G269, and L306–R320. Residues P195–Q339 are disordered. 19 consecutive repeat copies span residues W302 to A307, W308 to G313, W314 to A319, W338 to A343, W344 to I349, W350 to I355, W356 to I361, W362 to V367, W368 to V373, W374 to A379, W380 to G385, W386 to G391, W392 to G397, W398 to D403, W404 to D409, W410 to D415, W416 to D421, W422 to D427, and W428 to D433. Positions W302–P450 are 22 X 6 AA tandem repeats of W-[PQ]-X-P-X-X. A disordered region spans residues A379–L418. Positions P383–D403 are enriched in low complexity. Pro residues predominate over residues W404–L418. The 20; approximate repeat unit spans residues W434–D438. 2 tandem repeats follow at residues W439–D444 and W445–P450. The segment at V441–P471 is disordered. Low complexity predominate over residues N447–R461. In terms of domain architecture, MAGE spans L477–A675.

In terms of assembly, interacts with DLX5, DLX7 and MSX2 and forms homomultimers. Interacts with UNC5A. Interacts with TRIM28 and PJA1. Interacts with NGFR/p75NTR and RORA.

Its subcellular location is the cytoplasm. It is found in the cell membrane. The protein localises to the nucleus. Its function is as follows. Involved in the apoptotic response after nerve growth factor (NGF) binding in neuronal cells. Inhibits cell cycle progression, and facilitates NGFR-mediated apoptosis. May act as a regulator of the function of DLX family members. May enhance ubiquitin ligase activity of RING-type zinc finger-containing E3 ubiquitin-protein ligases. Proposed to act through recruitment and/or stabilization of the Ubl-conjugating enzyme (E2) at the E3:substrate complex. Plays a role in the circadian rhythm regulation. May act as RORA co-regulator, modulating the expression of core clock genes such as BMAL1 and NFIL3, induced, or NR1D1, repressed. The protein is Melanoma-associated antigen D1 (MAGED1) of Sus scrofa (Pig).